Here is a 132-residue protein sequence, read N- to C-terminus: TVTVTYDPSNAPSFQQEIANAAQIWNSSVRNVQLRAGGNADFSYYEGNDSRGSYAQTDGHGRGYIFLDYQQNQQYDSTRVTAHETGHVLGLPDHYQGPCSELMSGGGPGPSCTNPYPNAQERSRVNALWANG.

2 residues coordinate Ca(2+): aspartate 76 and threonine 78. Residue histidine 83 participates in Zn(2+) binding. The active site involves glutamate 84. Zn(2+) contacts are provided by histidine 87 and aspartate 93. Residues cysteine 99 and cysteine 112 are joined by a disulfide bond.

This sequence belongs to the peptidase M7 family. Ca(2+) is required as a cofactor. Zn(2+) serves as cofactor.

It is found in the secreted. The enzyme catalyses Hydrolyzes proteins with a preference for Tyr or Phe in the P1' position. Has no action on amino-acid p-nitroanilides.. Specifically hydrolyzes the peptide bond at the imino side of aromatic residues. The sequence is that of Extracellular small neutral protease (snpA) from Streptomyces caespitosus.